A 147-amino-acid polypeptide reads, in one-letter code: Large ribosomal subunit protein uL11 (147 aa).

This sequence belongs to the universal ribosomal protein uL11 family. As to quaternary structure, part of the ribosomal stalk of the 50S ribosomal subunit. Interacts with L10 and the large rRNA to form the base of the stalk. L10 forms an elongated spine to which L12 dimers bind in a sequential fashion forming a multimeric L10(L12)X complex. One or more lysine residues are methylated.

In terms of biological role, forms part of the ribosomal stalk which helps the ribosome interact with GTP-bound translation factors. The polypeptide is Large ribosomal subunit protein uL11 (Sorangium cellulosum (strain So ce56) (Polyangium cellulosum (strain So ce56))).